A 586-amino-acid polypeptide reads, in one-letter code: FAD-linked oxidoreductase orf1 (586 aa).

Residues 1-17 form the signal peptide; sequence MKSFATTVLLVTPGIYA. 12 N-linked (GlcNAc...) asparagine glycosylation sites follow: Asn-29, Asn-51, Asn-79, Asn-110, Asn-146, Asn-188, Asn-314, Asn-321, Asn-358, Asn-402, Asn-434, and Asn-461. Residues 124-303 form the FAD-binding PCMH-type domain; sequence TLGNYVSYAI…LSMTAKVHPD (180 aa).

This sequence belongs to the oxygen-dependent FAD-linked oxidoreductase family.

The catalysed reaction is betaenone C = betaenone A. Its pathway is mycotoxin biosynthesis. In terms of biological role, FAD-linked oxidoreductase; part of the gene cluster that mediates the biosynthesis of betaenones, phytotoxic polyketides involved in leaf spot disease in sugar beets. The first step of the pathway is the synthesis of dehydroprobetaenone I by the polyketide synthase bet1 and the enoyl reductase bet3 via condensation of one acetyl-CoA starter unit with 7 malonyl-CoA units and 5 methylations. The C-terminal reductase (R) domain of bet1 catalyzes the reductive release of the polyketide chain. Because bet1 lacks a designated enoylreductase (ER) domain, the required activity is provided the enoyl reductase bet3. The short-chain dehydrogenase/reductase bet4 then catalyzes reduction of dehydroprobetaenone I to probetaenone I. The cytochrome P450 monooxygenase bet2 catalyzes successive epoxidation, oxidation (resulting from epoxide opening) and hydroxylation to install a tertiary alcohol in the decaline ring to yield betaenone C from dehydroprobetaenone I and betaenone B from probetaenone I. The FAD-linked oxidoreductase (orf1) is probably responsible for the conversion of betaenone C to betaenone A via an intramolecular aldol reaction between C-1 and C-17 to form the bridged tricyclic system in betaenone A. This is FAD-linked oxidoreductase orf1 from Neocamarosporium betae (Beet black rot fungus).